The following is a 463-amino-acid chain: Quinolone resistance protein NorB (463 aa).

The next 14 helical transmembrane spans lie at 17 to 37 (IGIV…VNVV), 53 to 73 (IAVS…GGLA), 86 to 106 (IILN…LLLI), 107 to 127 (IGRL…LSII), 142 to 162 (YWSI…GAVA), 165 to 185 (LGWR…LFLI), 201 to 221 (FDIK…ILIT), 230 to 250 (SLLF…FIVL), 273 to 293 (TASN…NTFV), 299 to 319 (YSSL…LIMI), 334 to 354 (PMLI…LTFL), 357 to 377 (IFYV…LGIY), 403 to 423 (MASA…YAIV), and 435 to 455 (IALW…LLLV).

The protein belongs to the major facilitator superfamily. TCR/Tet family.

Its subcellular location is the cell membrane. In terms of biological role, multidrug efflux pump that acts independently of NorA and is one of the factors that confers resistance against diverse quinolones and chemical compounds. In Staphylococcus aureus (strain USA300), this protein is Quinolone resistance protein NorB (norB).